The chain runs to 272 residues: 3-methyl-2-oxobutanoate hydroxymethyltransferase (272 aa).

Residues Asp-51 and Asp-90 each contribute to the Mg(2+) site. Residues 51 to 52 (DS), Asp-90, and Lys-119 contribute to the 3-methyl-2-oxobutanoate site. Position 121 (Glu-121) interacts with Mg(2+). Glu-188 (proton acceptor) is an active-site residue.

This sequence belongs to the PanB family. Homodecamer; pentamer of dimers. The cofactor is Mg(2+).

It is found in the cytoplasm. It catalyses the reaction 3-methyl-2-oxobutanoate + (6R)-5,10-methylene-5,6,7,8-tetrahydrofolate + H2O = 2-dehydropantoate + (6S)-5,6,7,8-tetrahydrofolate. Its pathway is cofactor biosynthesis; (R)-pantothenate biosynthesis; (R)-pantoate from 3-methyl-2-oxobutanoate: step 1/2. Its function is as follows. Catalyzes the reversible reaction in which hydroxymethyl group from 5,10-methylenetetrahydrofolate is transferred onto alpha-ketoisovalerate to form ketopantoate. The polypeptide is 3-methyl-2-oxobutanoate hydroxymethyltransferase (Dechloromonas aromatica (strain RCB)).